Here is a 543-residue protein sequence, read N- to C-terminus: Cyclohexanone 1,2-monooxygenase (543 aa).

6 residues coordinate FAD: Phe-16, Asp-37, Trp-46, Asp-57, Tyr-63, and Val-110.

This sequence belongs to the FAD-binding monooxygenase family. Requires FAD as cofactor.

The enzyme catalyses cyclohexanone + NADPH + O2 + H(+) = hexano-6-lactone + NADP(+) + H2O. The polypeptide is Cyclohexanone 1,2-monooxygenase (Acinetobacter sp).